The primary structure comprises 500 residues: Protein nucleotidyltransferase YdiU (500 aa).

ATP is bound by residues G98, G100, R101, K124, D136, G137, R187, and R194. The active-site Proton acceptor is the D263. The Mg(2+) site is built by N264 and D273. Position 273 (D273) interacts with ATP.

Belongs to the SELO family. Requires Mg(2+) as cofactor. Mn(2+) is required as a cofactor.

The catalysed reaction is L-seryl-[protein] + ATP = 3-O-(5'-adenylyl)-L-seryl-[protein] + diphosphate. It carries out the reaction L-threonyl-[protein] + ATP = 3-O-(5'-adenylyl)-L-threonyl-[protein] + diphosphate. It catalyses the reaction L-tyrosyl-[protein] + ATP = O-(5'-adenylyl)-L-tyrosyl-[protein] + diphosphate. The enzyme catalyses L-histidyl-[protein] + UTP = N(tele)-(5'-uridylyl)-L-histidyl-[protein] + diphosphate. The catalysed reaction is L-seryl-[protein] + UTP = O-(5'-uridylyl)-L-seryl-[protein] + diphosphate. It carries out the reaction L-tyrosyl-[protein] + UTP = O-(5'-uridylyl)-L-tyrosyl-[protein] + diphosphate. In terms of biological role, nucleotidyltransferase involved in the post-translational modification of proteins. It can catalyze the addition of adenosine monophosphate (AMP) or uridine monophosphate (UMP) to a protein, resulting in modifications known as AMPylation and UMPylation. This is Protein nucleotidyltransferase YdiU from Herminiimonas arsenicoxydans.